Reading from the N-terminus, the 182-residue chain is Isopentenyl-diphosphate Delta-isomerase (182 aa).

Residues His25 and His32 each contribute to the Mn(2+) site. The Nudix hydrolase domain maps to 30-164 (RLHLAFSSWL…PWAFSPWMVM (135 aa)). The active site involves Cys67. Residue Cys67 coordinates Mg(2+). His69 lines the Mn(2+) pocket. Mg(2+) is bound at residue Glu87. Residues Glu114 and Glu116 each contribute to the Mn(2+) site. Residue Glu116 is part of the active site.

The protein belongs to the IPP isomerase type 1 family. In terms of assembly, homodimer. Requires Mg(2+) as cofactor. The cofactor is Mn(2+).

The protein resides in the cytoplasm. The enzyme catalyses isopentenyl diphosphate = dimethylallyl diphosphate. The protein operates within isoprenoid biosynthesis; dimethylallyl diphosphate biosynthesis; dimethylallyl diphosphate from isopentenyl diphosphate: step 1/1. Functionally, catalyzes the 1,3-allylic rearrangement of the homoallylic substrate isopentenyl (IPP) to its highly electrophilic allylic isomer, dimethylallyl diphosphate (DMAPP). In Shigella dysenteriae serotype 1 (strain Sd197), this protein is Isopentenyl-diphosphate Delta-isomerase.